Here is a 124-residue protein sequence, read N- to C-terminus: Phosphoribosyl-AMP cyclohydrolase (124 aa).

Residue D82 participates in Mg(2+) binding. Zn(2+) is bound at residue C83. The Mg(2+) site is built by D84 and D86. The Zn(2+) site is built by C99 and C106.

Belongs to the PRA-CH family. As to quaternary structure, homodimer. Mg(2+) is required as a cofactor. It depends on Zn(2+) as a cofactor.

The protein localises to the cytoplasm. The enzyme catalyses 1-(5-phospho-beta-D-ribosyl)-5'-AMP + H2O = 1-(5-phospho-beta-D-ribosyl)-5-[(5-phospho-beta-D-ribosylamino)methylideneamino]imidazole-4-carboxamide. It participates in amino-acid biosynthesis; L-histidine biosynthesis; L-histidine from 5-phospho-alpha-D-ribose 1-diphosphate: step 3/9. Functionally, catalyzes the hydrolysis of the adenine ring of phosphoribosyl-AMP. In Rhizorhabdus wittichii (strain DSM 6014 / CCUG 31198 / JCM 15750 / NBRC 105917 / EY 4224 / RW1) (Sphingomonas wittichii), this protein is Phosphoribosyl-AMP cyclohydrolase.